The sequence spans 209 residues: Large ribosomal subunit protein uL3 (209 aa).

The interval 130-162 is disordered; that stretch reads RGPMTHGSKFKRAPGSMGASSDPSRTFKNKRMP.

The protein belongs to the universal ribosomal protein uL3 family. In terms of assembly, part of the 50S ribosomal subunit. Forms a cluster with proteins L14 and L19.

One of the primary rRNA binding proteins, it binds directly near the 3'-end of the 23S rRNA, where it nucleates assembly of the 50S subunit. The sequence is that of Large ribosomal subunit protein uL3 from Clostridium botulinum (strain Alaska E43 / Type E3).